Reading from the N-terminus, the 158-residue chain is UPF0145 protein Psyc_1853 (158 aa).

Positions Ile113–Ser122 are enriched in polar residues. A disordered region spans residues Ile113–Glu158.

The protein belongs to the UPF0145 family.

The polypeptide is UPF0145 protein Psyc_1853 (Psychrobacter arcticus (strain DSM 17307 / VKM B-2377 / 273-4)).